A 101-amino-acid chain; its full sequence is Small ribosomal subunit protein uS14 (101 aa).

It belongs to the universal ribosomal protein uS14 family. In terms of assembly, part of the 30S ribosomal subunit. Contacts proteins S3 and S10.

Functionally, binds 16S rRNA, required for the assembly of 30S particles and may also be responsible for determining the conformation of the 16S rRNA at the A site. The sequence is that of Small ribosomal subunit protein uS14 from Francisella philomiragia subsp. philomiragia (strain ATCC 25017 / CCUG 19701 / FSC 153 / O#319-036).